A 222-amino-acid polypeptide reads, in one-letter code: Triosephosphate isomerase (222 aa).

9–11 is a substrate binding site; that stretch reads NYK. The active-site Electrophile is the His-93. Glu-141 acts as the Proton acceptor in catalysis. Substrate contacts are provided by residues Ile-146, Gly-181, and 202–203; that span reads AS.

The protein belongs to the triosephosphate isomerase family. In terms of assembly, homotetramer; dimer of dimers.

The protein localises to the cytoplasm. It carries out the reaction D-glyceraldehyde 3-phosphate = dihydroxyacetone phosphate. It functions in the pathway carbohydrate biosynthesis; gluconeogenesis. The protein operates within carbohydrate degradation; glycolysis; D-glyceraldehyde 3-phosphate from glycerone phosphate: step 1/1. In terms of biological role, involved in the gluconeogenesis. Catalyzes stereospecifically the conversion of dihydroxyacetone phosphate (DHAP) to D-glyceraldehyde-3-phosphate (G3P). The sequence is that of Triosephosphate isomerase from Methanosarcina acetivorans (strain ATCC 35395 / DSM 2834 / JCM 12185 / C2A).